The chain runs to 265 residues: Adenosylcobinamide-GDP ribazoletransferase (265 aa).

5 helical membrane passes run 59–79 (LSWI…SVLI), 113–133 (IGTF…LLLV), 141–161 (WIFL…ALLL), 183–203 (LPPF…VYFL), and 206–226 (FQNQ…FVFY).

It belongs to the CobS family. Mg(2+) serves as cofactor.

The protein localises to the cell inner membrane. The enzyme catalyses alpha-ribazole + adenosylcob(III)inamide-GDP = adenosylcob(III)alamin + GMP + H(+). The catalysed reaction is alpha-ribazole 5'-phosphate + adenosylcob(III)inamide-GDP = adenosylcob(III)alamin 5'-phosphate + GMP + H(+). Its pathway is cofactor biosynthesis; adenosylcobalamin biosynthesis; adenosylcobalamin from cob(II)yrinate a,c-diamide: step 7/7. Its function is as follows. Joins adenosylcobinamide-GDP and alpha-ribazole to generate adenosylcobalamin (Ado-cobalamin). Also synthesizes adenosylcobalamin 5'-phosphate from adenosylcobinamide-GDP and alpha-ribazole 5'-phosphate. The sequence is that of Adenosylcobinamide-GDP ribazoletransferase from Leptospira interrogans serogroup Icterohaemorrhagiae serovar copenhageni (strain Fiocruz L1-130).